Here is a 305-residue protein sequence, read N- to C-terminus: Protein MFI (305 aa).

Can homodimerize. Interacts with MFF; the interaction inhibits MFF interaction with DNM1L.

Its subcellular location is the cytoplasm. The protein resides in the cytosol. It is found in the mitochondrion outer membrane. Acts as an inhibitor of mitochondrial fission. Interacts with MFF and prevents DNM1L recruitment to mitochondria, promoting a more fused mitochondrial network. The polypeptide is Protein MFI (Rattus norvegicus (Rat)).